A 255-amino-acid chain; its full sequence is F-box/SPRY domain-containing protein 1 (255 aa).

The region spanning 3–51 (DPVAALCNYNVLEVIFSYLELEDLSHCSQVCKSWYHFLNDENSDVWRWH) is the F-box domain. The B30.2/SPRY domain maps to 61–253 (LKSDLLSSVS…VSMVYLGTPL (193 aa)).

Belongs to the FBXO45/Fsn family. In terms of assembly, component of an E3 ubiquitin ligase complex composed of hiw and Fsn.

The protein resides in the synapse. It participates in protein modification; protein ubiquitination. Functionally, required in the presynaptic motoneuron to down-regulate the levels of wnd and restrain synaptic terminal growth at the neuromuscular junction (NMJ). The sequence is that of F-box/SPRY domain-containing protein 1 from Drosophila erecta (Fruit fly).